Consider the following 370-residue polypeptide: Polygalacturonase 1 (370 aa).

An N-terminal signal peptide occupies residues 1-18; the sequence is MRTSILSMLALGAAAVSA. C36 and C51 are disulfide-bonded. 5 PbH1 repeats span residues 163 to 194, 195 to 216, 217 to 237, 246 to 267, and 275 to 297; these read ADNLVLDHITIDNTDGDKTNGGHNTDAFDVGE, STYITISNANIKNQDDCLAINS, GENIIFTGGTCSGGHGLSIGS, VKNVTISDSTVSNSDNGIRIKT, and VADVTFSNIELSNIAKYGIVIEQ. Catalysis depends on D209, which acts as the Proton donor. A disulfide bond links C211 and C227. Residue H231 is part of the active site. N248 carries an N-linked (GlcNAc...) asparagine glycan. Disulfide bonds link C337/C342 and C361/C370.

It belongs to the glycosyl hydrolase 28 family.

The protein localises to the secreted. The enzyme catalyses (1,4-alpha-D-galacturonosyl)n+m + H2O = (1,4-alpha-D-galacturonosyl)n + (1,4-alpha-D-galacturonosyl)m.. The protein is Polygalacturonase 1 (PG1) of Penicillium olsonii.